A 499-amino-acid polypeptide reads, in one-letter code: Putative ribose/galactose/methyl galactoside import ATP-binding protein 3 (499 aa).

ABC transporter domains are found at residues 8-243 (LRMR…VGRE) and 253-497 (SKIG…TGEE). ATP is bound at residue 40 to 47 (GENGAGKS).

This sequence belongs to the ABC transporter superfamily. Carbohydrate importer 2 (CUT2) (TC 3.A.1.2) family.

It localises to the cell inner membrane. The catalysed reaction is D-ribose(out) + ATP + H2O = D-ribose(in) + ADP + phosphate + H(+). It carries out the reaction D-galactose(out) + ATP + H2O = D-galactose(in) + ADP + phosphate + H(+). In terms of biological role, part of an ABC transporter complex involved in carbohydrate import. Could be involved in ribose, galactose and/or methyl galactoside import. Responsible for energy coupling to the transport system. The sequence is that of Putative ribose/galactose/methyl galactoside import ATP-binding protein 3 from Agrobacterium fabrum (strain C58 / ATCC 33970) (Agrobacterium tumefaciens (strain C58)).